A 208-amino-acid polypeptide reads, in one-letter code: Uracil phosphoribosyltransferase (208 aa).

5-phospho-alpha-D-ribose 1-diphosphate-binding positions include arginine 78, arginine 103, and 130–138 (DPMLATGGT). Residues isoleucine 193 and 198-200 (GDA) each bind uracil. Aspartate 199 is a 5-phospho-alpha-D-ribose 1-diphosphate binding site.

This sequence belongs to the UPRTase family. Mg(2+) serves as cofactor.

It catalyses the reaction UMP + diphosphate = 5-phospho-alpha-D-ribose 1-diphosphate + uracil. Its pathway is pyrimidine metabolism; UMP biosynthesis via salvage pathway; UMP from uracil: step 1/1. Allosterically activated by GTP. Functionally, catalyzes the conversion of uracil and 5-phospho-alpha-D-ribose 1-diphosphate (PRPP) to UMP and diphosphate. The polypeptide is Uracil phosphoribosyltransferase (Desulforapulum autotrophicum (strain ATCC 43914 / DSM 3382 / VKM B-1955 / HRM2) (Desulfobacterium autotrophicum)).